The chain runs to 176 residues: NAD(P)H-quinone oxidoreductase subunit 6, chloroplastic (176 aa).

Helical transmembrane passes span 10–30, 32–52, 60–80, 107–127, and 152–172; these read FLLV…VLLT, PIFS…FHIP, AAQL…AVMF, IFVS…IWTT, and FFLP…GAIA.

This sequence belongs to the complex I subunit 6 family. As to quaternary structure, NDH is composed of at least 16 different subunits, 5 of which are encoded in the nucleus.

It is found in the plastid. Its subcellular location is the chloroplast thylakoid membrane. It carries out the reaction a plastoquinone + NADH + (n+1) H(+)(in) = a plastoquinol + NAD(+) + n H(+)(out). The enzyme catalyses a plastoquinone + NADPH + (n+1) H(+)(in) = a plastoquinol + NADP(+) + n H(+)(out). Its function is as follows. NDH shuttles electrons from NAD(P)H:plastoquinone, via FMN and iron-sulfur (Fe-S) centers, to quinones in the photosynthetic chain and possibly in a chloroplast respiratory chain. The immediate electron acceptor for the enzyme in this species is believed to be plastoquinone. Couples the redox reaction to proton translocation, and thus conserves the redox energy in a proton gradient. This chain is NAD(P)H-quinone oxidoreductase subunit 6, chloroplastic (ndhG), found in Buxus microphylla (Littleleaf boxwood).